The following is a 68-amino-acid chain: MGRKWSGPTAEHQLPMPPPGVRLDSWKGVASGCSPSKASQEARGKEKCPTLNGQPQWSALFTLPPQRE.

Residues 28–68 are disordered; sequence GVASGCSPSKASQEARGKEKCPTLNGQPQWSALFTLPPQRE.

In terms of tissue distribution, shows reduced expression in Wilms' tumor samples.

The polypeptide is KCNQ1 downstream neighbor protein (KCNQ1DN) (Homo sapiens (Human)).